A 913-amino-acid chain; its full sequence is DNA repair endonuclease XPF (913 aa).

The helicase-like stretch occupies residues Met1 to Asp454. 2 leucine-zipper regions span residues Leu233 to Leu254 and Leu270 to Leu298. Lys289 bears the N6-acetyllysine mark. Basic and acidic residues predominate over residues Gly453–Ser476. 2 disordered regions span residues Gly453–Glu525 and Val638–Thr677. A Nuclear localization signal motif is present at residues Lys483–Glu488. A compositionally biased stretch (acidic residues) spans Glu500–Glu509. Residue Ser518 is modified to Phosphoserine. The segment covering Val638 to Thr649 has biased composition (basic and acidic residues). Residues Arg655 to Phe810 are nuclease. The region spanning Ser680–Ala760 is the ERCC4 domain. Residues Thr834 to Tyr902 form a hhH2, dimerization with ERCC1 region.

It belongs to the XPF family. As to quaternary structure, heterodimer composed of ERCC1 and ERCC4/XPF. Interacts with SLX4/BTBD12; this interaction is direct and links the ERCC1-ERCC4/XPF complex to SLX4, which may coordinate the action of the structure-specific endonuclease during DNA repair. It depends on Mg(2+) as a cofactor.

Its subcellular location is the nucleus. The protein localises to the chromosome. Functionally, catalytic component of a structure-specific DNA repair endonuclease responsible for the 5-prime incision during DNA repair, and which is essential for nucleotide excision repair (NER) and interstrand cross-link (ICL) repair. This is DNA repair endonuclease XPF from Cricetulus griseus (Chinese hamster).